We begin with the raw amino-acid sequence, 268 residues long: Satratoxin biosynthesis SC1 cluster protein 4 (268 aa).

4 helical membrane passes run 34 to 54 (VWLV…VHIF), 78 to 98 (LFAI…GLAI), 113 to 133 (HLAG…IKIV), and 145 to 165 (AVIW…APIY).

The protein belongs to the SAT4 family.

The protein resides in the membrane. It participates in mycotoxin biosynthesis. Functionally, part of the satratoxin SC1 cluster involved in the biosynthesis of satratoxins, trichothecene mycotoxins that are associated with human food poisonings. Satratoxins are suggested to be made by products of multiple gene clusters (SC1, SC2 and SC3) that encode 21 proteins in all, including polyketide synthases, acetyltransferases, and other enzymes expected to modify the trichothecene skeleton. SC1 encodes 10 proteins, SAT1 to SAT10. The largest are SAT8, which encodes a putative polyketide synthase (PKS) with a conventional non-reducing architecture, and SAT10, a putative protein containing four ankyrin repeats and thus may be involved in protein scaffolding. The putative short-chain reductase SAT3 may assist the PKS in some capacity. SAT6 contains a secretory lipase domain and acts probably as a trichothecene esterase. SAT5 encodes a putative acetyltransferase, and so, with SAT6, may affect endogenous protection from toxicity. The probable transcription factor SAT9 may regulate the expression of the SC1 cluster. SC2 encodes proteins SAT11 to SAT16, the largest of which encodes the putative reducing PKS SAT13. SAT11 is a cytochrome P450 monooxygenase, while SAT14 and SAT16 are probable acetyltransferases. The SC2 cluster may be regulated by the transcription factor SAT15. SC3 is a small cluster that encodes 5 proteins, SAT17 to SAT21. SAT21 is a putative MFS-type transporter which may have a role in exporting secondary metabolites. The four other proteins putatively encoded in SC3 include the taurine hydroxylase-like protein SAT17, the O-methyltransferase SAT18, the acetyltransferase SAT19, and the Cys6-type zinc finger SAT20, the latter being probably involved in regulation of SC3 expression. This is Satratoxin biosynthesis SC1 cluster protein 4 from Stachybotrys chartarum (strain CBS 109288 / IBT 7711) (Toxic black mold).